Reading from the N-terminus, the 128-residue chain is Large ribosomal subunit protein bL17 (128 aa).

It belongs to the bacterial ribosomal protein bL17 family. As to quaternary structure, part of the 50S ribosomal subunit. Contacts protein L32.

In Streptococcus sanguinis (strain SK36), this protein is Large ribosomal subunit protein bL17.